Consider the following 443-residue polypeptide: MKIGIINTKIRTVFSAFACMIAASLVCTMPARAVVEININKGVIEPLPIAITDFLSADQLGSNITSVIAADLERSGLFAPIDTGAFIEKISNPDAAPRFEDWKVINAQALVTGRITKQPDGRLKAEFRLWDTFGGQQMIGQQFFTTPDNWRRVAHIIADAIYERLTGDKGYFDTRVVFVDESGPAQKRVKRLAIMDQDGANVRFISDGRALSLTPRFSPNRQEVTYMSFEGGSPKVYLLQLETGQRELVGNFPGMTIAPRFSPDGQKVVMSLLQDDGSANIYTMDLRNRTTTRLTSSQAIDTGASYSPDGSQIVFTSDRGGRPQLYVMGADGSNPRRISMGDGSYSTPVWSPRGDLIAFTKQSQGQFSIGVMKTDGSGERLLTSGFHNEGPTWAPNGRVLMFFRKAAGAGGPKLFTIDLTGRNERQIQTPNFASDPAWSPLLE.

A signal peptide spans methionine 1 to alanine 33.

This sequence belongs to the TolB family. The Tol-Pal system is composed of five core proteins: the inner membrane proteins TolA, TolQ and TolR, the periplasmic protein TolB and the outer membrane protein Pal. They form a network linking the inner and outer membranes and the peptidoglycan layer.

It is found in the periplasm. In terms of biological role, part of the Tol-Pal system, which plays a role in outer membrane invagination during cell division and is important for maintaining outer membrane integrity. This Brucella melitensis biotype 1 (strain ATCC 23456 / CCUG 17765 / NCTC 10094 / 16M) protein is Tol-Pal system protein TolB.